Consider the following 119-residue polypeptide: Small ribosomal subunit protein uS13 (119 aa).

The disordered stretch occupies residues R92 to R119.

Belongs to the universal ribosomal protein uS13 family. In terms of assembly, part of the 30S ribosomal subunit. Forms a loose heterodimer with protein S19. Forms two bridges to the 50S subunit in the 70S ribosome.

Located at the top of the head of the 30S subunit, it contacts several helices of the 16S rRNA. In the 70S ribosome it contacts the 23S rRNA (bridge B1a) and protein L5 of the 50S subunit (bridge B1b), connecting the 2 subunits; these bridges are implicated in subunit movement. Contacts the tRNAs in the A and P-sites. The sequence is that of Small ribosomal subunit protein uS13 from Nitrosomonas eutropha (strain DSM 101675 / C91 / Nm57).